Reading from the N-terminus, the 71-residue chain is UPF0434 protein Meso_3270 (71 aa).

It belongs to the UPF0434 family.

This chain is UPF0434 protein Meso_3270, found in Chelativorans sp. (strain BNC1).